We begin with the raw amino-acid sequence, 188 residues long: Protein CRIPTO3 (188 aa).

The EGF-like domain maps to 78–107 (LNRTCCLNGGTCMLESFCACPPSFYGRNCE). A glycan (N-linked (GlcNAc...) asparagine) is linked at N79. 6 cysteine pairs are disulfide-bonded: C82/C89, C83/C95, C97/C106, C115/C133, C128/C149, and C131/C140.

Belongs to the EGF-CFC (Cripto-1/FRL1/Cryptic) family. As to expression, expressed weakly in lung, colon and breast. Expressed also strongly in primary cancer tissues; lung and colon cancers.

The protein localises to the cell membrane. Its function is as follows. Could play a role in the determination of the epiblastic cells that subsequently give rise to the mesoderm. Activates the Nodal-dependent signaling pathway. This is Protein CRIPTO3 from Homo sapiens (Human).